A 546-amino-acid chain; its full sequence is Chaperonin GroEL (546 aa).

ATP contacts are provided by residues 29–32 (TMGP), lysine 50, 86–90 (DGTTT), glycine 412, 476–478 (NAA), and aspartate 492.

The protein belongs to the chaperonin (HSP60) family. As to quaternary structure, forms a cylinder of 14 subunits composed of two heptameric rings stacked back-to-back. Interacts with the co-chaperonin GroES.

It is found in the cytoplasm. It carries out the reaction ATP + H2O + a folded polypeptide = ADP + phosphate + an unfolded polypeptide.. In terms of biological role, together with its co-chaperonin GroES, plays an essential role in assisting protein folding. The GroEL-GroES system forms a nano-cage that allows encapsulation of the non-native substrate proteins and provides a physical environment optimized to promote and accelerate protein folding. Functionally, may play a protective role against the defense mechanisms generated by the infected macrophages. The polypeptide is Chaperonin GroEL (Legionella micdadei (Tatlockia micdadei)).